Consider the following 1322-residue polypeptide: Serine/threonine-protein phosphatase UIS2 (1322 aa).

The N-terminal stretch at 1-22 (MNISKFFLIFIPLVLFKYPANN) is a signal peptide. Positions 1–535 (MNISKFFLIF…NELKSTSNAM (535 aa)) are interaction with phosphorylated eIF2alpha. 2 stretches are compositionally biased toward basic and acidic residues: residues 267 to 279 (EKSAEKYEDKELN) and 288 to 326 (NSKKEQTGNDNVSETKMHKEESSDSSNKTDESNVCKSEN). Disordered regions lie at residues 267-326 (EKSA…KSEN), 613-646 (NTNTDDKNQHNDISTTPINNYTDGNEGNNNSENN), 1066-1087 (NETPHNSNEILNTNENESIQPN), and 1170-1196 (EVPDESKEDDNTNSQPEDTIDQENKDD). A compositionally biased stretch (low complexity) spans 631 to 646 (NNYTDGNEGNNNSENN).

Mn(2+) serves as cofactor.

The enzyme catalyses O-phospho-L-seryl-[protein] + H2O = L-seryl-[protein] + phosphate. In terms of biological role, protein phosphatase which dephosphorylates 'Ser-59' of translation factor eIF2alpha during the liver stage, thus enabling protein translation. The polypeptide is Serine/threonine-protein phosphatase UIS2 (Plasmodium berghei (strain Anka)).